Consider the following 389-residue polypeptide: Succinate--CoA ligase [ADP-forming] subunit beta (389 aa).

Residues 9 to 236 (KELFAKHGVP…RDATDPLELK (228 aa)) enclose the ATP-grasp domain. ATP is bound by residues K45, 52–54 (GRG), S94, and E99. N191 and D205 together coordinate Mg(2+). Substrate contacts are provided by residues N256 and 318–320 (GIT).

The protein belongs to the succinate/malate CoA ligase beta subunit family. Heterotetramer of two alpha and two beta subunits. Mg(2+) is required as a cofactor.

The enzyme catalyses succinate + ATP + CoA = succinyl-CoA + ADP + phosphate. It carries out the reaction GTP + succinate + CoA = succinyl-CoA + GDP + phosphate. Its pathway is carbohydrate metabolism; tricarboxylic acid cycle; succinate from succinyl-CoA (ligase route): step 1/1. In terms of biological role, succinyl-CoA synthetase functions in the citric acid cycle (TCA), coupling the hydrolysis of succinyl-CoA to the synthesis of either ATP or GTP and thus represents the only step of substrate-level phosphorylation in the TCA. The beta subunit provides nucleotide specificity of the enzyme and binds the substrate succinate, while the binding sites for coenzyme A and phosphate are found in the alpha subunit. The sequence is that of Succinate--CoA ligase [ADP-forming] subunit beta from Rhodococcus erythropolis (strain PR4 / NBRC 100887).